Reading from the N-terminus, the 201-residue chain is Natural cytotoxicity triggering receptor 3 (201 aa).

The signal sequence occupies residues 1–18 (MAWMLLLILIMVHPGSCA). The Ig-like domain maps to 19–126 (LWVSQPPEIR…VGTGNGTRLV (108 aa)). The Extracellular segment spans residues 19-135 (LWVSQPPEIR…VVEKEHPQLG (117 aa)). The cysteines at positions 39 and 108 are disulfide-linked. 2 N-linked (GlcNAc...) asparagine glycosylation sites follow: Asn-42 and Asn-121. A helical membrane pass occupies residues 136-156 (AGTVLLLRAGFYAVSFLSVAV). Topologically, residues 157–201 (GSTVYYQGKCLTWKGPRRQLPAVVPAPLPPPCGSSAQLLPPVPGG) are cytoplasmic.

The protein belongs to the natural cytotoxicity receptor (NCR) family. As to quaternary structure, homodimer in the unliganted form. Interacts with CD3Z. Interacts with and is activated by binding to NCR3LG1. Interacts with and is activated by binding to BAG6. Interacts with and is inhibited by binding to LGALS3.

The protein localises to the cell membrane. In terms of biological role, cell membrane receptor of natural killer/NK cells that is activated by binding of extracellular ligands including BAG6 and NCR3LG1. Stimulates NK cells cytotoxicity toward neighboring cells producing these ligands. It controls, for instance, NK cells cytotoxicity against tumor cells. Engagement of NCR3 by BAG6 also promotes myeloid dendritic cells (DC) maturation, both through killing DCs that did not acquire a mature phenotype, and inducing the release by NK cells of TNFA and IFNG that promote DC maturation. This chain is Natural cytotoxicity triggering receptor 3 (NCR3), found in Pan troglodytes (Chimpanzee).